A 775-amino-acid polypeptide reads, in one-letter code: RNA-directed RNA polymerase (775 aa).

Positions 473–586 constitute a RdRp catalytic domain; that stretch reads TCAIGFDMKR…FFEADEVDRV (114 aa).

It carries out the reaction RNA(n) + a ribonucleoside 5'-triphosphate = RNA(n+1) + diphosphate. Functionally, RNA-dependent RNA polymerase that plays an essential role in the virus replication. The polypeptide is RNA-directed RNA polymerase (Brassica napus subsp. rapifera (Purple mistress)).